Consider the following 903-residue polypeptide: Probable leucine--tRNA ligase, mitochondrial (903 aa).

At K68 the chain carries N6-acetyllysine. Residues 92–102 carry the 'HIGH' region motif; sequence YPSGKLHMGHV. N6-acetyllysine is present on K236. Residues 639–643 carry the 'KMSKS' region motif; it reads KMSKS. K642 provides a ligand contact to ATP. A Phosphoserine modification is found at S711.

It belongs to the class-I aminoacyl-tRNA synthetase family.

Its subcellular location is the mitochondrion matrix. It catalyses the reaction tRNA(Leu) + L-leucine + ATP = L-leucyl-tRNA(Leu) + AMP + diphosphate. This chain is Probable leucine--tRNA ligase, mitochondrial (LARS2), found in Pongo abelii (Sumatran orangutan).